The primary structure comprises 215 residues: Cytochrome b6 (215 aa).

The chain crosses the membrane as a helical span at residues 32 to 52; the sequence is IFYCLGGITLTCFLVQVATGF. C35 serves as a coordination point for heme c. Heme b contacts are provided by H86 and H100. Helical transmembrane passes span 90 to 110, 116 to 136, and 186 to 206; these read ASMMVLMMILHVFRVYLTGGF, LTWVTGVILAVLTVSFGVTGY, and LHTFILPLLTAVFMPMHFLMI. Residues H187 and H202 each contribute to the heme b site.

It belongs to the cytochrome b family. PetB subfamily. The 4 large subunits of the cytochrome b6-f complex are cytochrome b6, subunit IV (17 kDa polypeptide, PetD), cytochrome f and the Rieske protein, while the 4 small subunits are PetG, PetL, PetM and PetN. The complex functions as a dimer. The cofactor is heme b. Heme c serves as cofactor.

The protein localises to the plastid. It localises to the chloroplast thylakoid membrane. Functionally, component of the cytochrome b6-f complex, which mediates electron transfer between photosystem II (PSII) and photosystem I (PSI), cyclic electron flow around PSI, and state transitions. The polypeptide is Cytochrome b6 (Pinus koraiensis (Korean pine)).